Consider the following 116-residue polypeptide: Large ribosomal subunit protein bL20 (116 aa).

The protein belongs to the bacterial ribosomal protein bL20 family.

Its function is as follows. Binds directly to 23S ribosomal RNA and is necessary for the in vitro assembly process of the 50S ribosomal subunit. It is not involved in the protein synthesizing functions of that subunit. In Picosynechococcus sp. (strain ATCC 27264 / PCC 7002 / PR-6) (Agmenellum quadruplicatum), this protein is Large ribosomal subunit protein bL20.